The sequence spans 378 residues: Queuine tRNA-ribosyltransferase (378 aa).

Asp89 acts as the Proton acceptor in catalysis. Residues 89–93, Asp143, Gln187, and Gly214 contribute to the substrate site; that span reads DSGGF. Residues 245 to 251 form an RNA binding region; the sequence is GVGKPED. Asp264 functions as the Nucleophile in the catalytic mechanism. The tract at residues 269-273 is RNA binding; important for wobble base 34 recognition; that stretch reads TRNAR. Zn(2+) is bound by residues Cys302, Cys304, Cys307, and His333.

It belongs to the queuine tRNA-ribosyltransferase family. As to quaternary structure, homodimer. Within each dimer, one monomer is responsible for RNA recognition and catalysis, while the other monomer binds to the replacement base PreQ1. The cofactor is Zn(2+).

The catalysed reaction is 7-aminomethyl-7-carbaguanine + guanosine(34) in tRNA = 7-aminomethyl-7-carbaguanosine(34) in tRNA + guanine. It functions in the pathway tRNA modification; tRNA-queuosine biosynthesis. Functionally, catalyzes the base-exchange of a guanine (G) residue with the queuine precursor 7-aminomethyl-7-deazaguanine (PreQ1) at position 34 (anticodon wobble position) in tRNAs with GU(N) anticodons (tRNA-Asp, -Asn, -His and -Tyr). Catalysis occurs through a double-displacement mechanism. The nucleophile active site attacks the C1' of nucleotide 34 to detach the guanine base from the RNA, forming a covalent enzyme-RNA intermediate. The proton acceptor active site deprotonates the incoming PreQ1, allowing a nucleophilic attack on the C1' of the ribose to form the product. After dissociation, two additional enzymatic reactions on the tRNA convert PreQ1 to queuine (Q), resulting in the hypermodified nucleoside queuosine (7-(((4,5-cis-dihydroxy-2-cyclopenten-1-yl)amino)methyl)-7-deazaguanosine). In Yersinia enterocolitica serotype O:8 / biotype 1B (strain NCTC 13174 / 8081), this protein is Queuine tRNA-ribosyltransferase.